Reading from the N-terminus, the 1242-residue chain is ATP-dependent helicase/nuclease subunit A (1242 aa).

Residues 12–487 (SRWTDEQWKA…IDLASNFRSR (476 aa)) form the UvrD-like helicase ATP-binding domain. 33–40 (AAAGSGKT) serves as a coordination point for ATP. The UvrD-like helicase C-terminal domain maps to 514-808 (AAQLKYGADY…RVMTIHSSKG (295 aa)).

The protein belongs to the helicase family. AddA subfamily. Heterodimer of AddA and AddB/RexB. It depends on Mg(2+) as a cofactor.

It catalyses the reaction Couples ATP hydrolysis with the unwinding of duplex DNA by translocating in the 3'-5' direction.. It carries out the reaction ATP + H2O = ADP + phosphate + H(+). In terms of biological role, the heterodimer acts as both an ATP-dependent DNA helicase and an ATP-dependent, dual-direction single-stranded exonuclease. Recognizes the chi site generating a DNA molecule suitable for the initiation of homologous recombination. The AddA nuclease domain is required for chi fragment generation; this subunit has the helicase and 3' -&gt; 5' nuclease activities. This is ATP-dependent helicase/nuclease subunit A from Geobacillus thermodenitrificans (strain NG80-2).